We begin with the raw amino-acid sequence, 490 residues long: Dual specificity protein kinase CLK3 (490 aa).

Positions 1–138 (MHHCKRYRSP…SKRSSRSVED (138 aa)) are disordered. Residue Y7 is modified to Phosphotyrosine. Residues S9, S49, S51, S67, S76, and S78 each carry the phosphoserine modification. 2 stretches are compositionally biased toward basic and acidic residues: residues 26–56 (YSREHEGRLRYPSRREPPPRRSRSRSHDRIP) and 63–76 (EHRDSDTYRCEERS). The segment covering 88–116 (RSRHRRRSRERAPYRTRKHAHHCHKRRTR) has biased composition (basic residues). The segment covering 117 to 130 (SCSSASSRSQQSSK) has biased composition (low complexity). Position 135 is a phosphoserine (S135). The Protein kinase domain maps to 156 to 472 (YEIVGNLGEG…LAEALLHPFF (317 aa)). ATP contacts are provided by residues 162–170 (LGEGTFGKV) and K186. Residue D283 is the Proton acceptor of the active site.

Belongs to the protein kinase superfamily. CMGC Ser/Thr protein kinase family. Lammer subfamily. Post-translationally, autophosphorylates on all three types of residues. In terms of tissue distribution, present at high levels in testis and ovary. In testis, expression is restricted to elongated, maturing spermatozoa. Also present in spleen, brain, lung and liver (at protein level).

It is found in the nucleus. Its subcellular location is the cytoplasm. It localises to the cytoplasmic vesicle. The protein localises to the secretory vesicle. The protein resides in the acrosome. It catalyses the reaction L-seryl-[protein] + ATP = O-phospho-L-seryl-[protein] + ADP + H(+). The enzyme catalyses L-threonyl-[protein] + ATP = O-phospho-L-threonyl-[protein] + ADP + H(+). The catalysed reaction is L-tyrosyl-[protein] + ATP = O-phospho-L-tyrosyl-[protein] + ADP + H(+). Its activity is regulated as follows. Leucettine L41 inhibits its kinase activity and affects the regulation of alternative splicing mediated by phosphorylation of SR proteins. Dual specificity kinase acting on both serine/threonine and tyrosine-containing substrates. Phosphorylates serine- and arginine-rich (SR) proteins of the spliceosomal complex. May be a constituent of a network of regulatory mechanisms that enable SR proteins to control RNA splicing and can cause redistribution of SR proteins from speckles to a diffuse nucleoplasmic distribution. Phosphorylates SRSF1 and SRSF3. Regulates the alternative splicing of tissue factor (F3) pre-mRNA in endothelial cells. In Mus musculus (Mouse), this protein is Dual specificity protein kinase CLK3.